A 296-amino-acid chain; its full sequence is Probable endonuclease 4 (296 aa).

H68, H109, E144, D178, H181, H213, D226, H228, and E258 together coordinate Zn(2+).

It belongs to the AP endonuclease 2 family. Zn(2+) is required as a cofactor.

The catalysed reaction is Endonucleolytic cleavage to 5'-phosphooligonucleotide end-products.. In terms of biological role, endonuclease IV plays a role in DNA repair. It cleaves phosphodiester bonds at apurinic or apyrimidinic (AP) sites, generating a 3'-hydroxyl group and a 5'-terminal sugar phosphate. The chain is Probable endonuclease 4 from Staphylococcus aureus (strain NCTC 8325 / PS 47).